Reading from the N-terminus, the 221-residue chain is MSNKILTLKNVSKHYRQGNSIIRVLDDLNLNINEGELIAIIGSSGSGKSTLLHIAGLLDKPTNGEVIIANNEYKTNHLIRLNYLGFIYQQHHLLKDFTAIENVIMPRLINGSNQKEAIEAAKSILDSLGLGKKLHNMPGELSGGEQQRVAIARSLINKPKIILADEPTGNLDPKTTNEVFNLFLKVAKEQNTAIVMVTHNHELAHRMDKLYKLKHGALNMS.

Residues 6-220 (LTLKNVSKHY…YKLKHGALNM (215 aa)) form the ABC transporter domain. 42-49 (GSSGSGKS) lines the ATP pocket.

It belongs to the ABC transporter superfamily. Lipoprotein translocase (TC 3.A.1.125) family. As to quaternary structure, the complex is composed of two ATP-binding proteins (LolD) and two transmembrane proteins (LolC and LolE).

The protein localises to the cell inner membrane. Its function is as follows. Part of the ABC transporter complex LolCDE involved in the translocation of mature outer membrane-directed lipoproteins, from the inner membrane to the periplasmic chaperone, LolA. Responsible for the formation of the LolA-lipoprotein complex in an ATP-dependent manner. The chain is Lipoprotein-releasing system ATP-binding protein LolD from Rickettsia bellii (strain RML369-C).